Consider the following 134-residue polypeptide: Small ribosomal subunit protein bS6 (134 aa).

Residues 99–134 form a disordered region; it reads PSQLAKSADEKRARKAPRSENFDNDQDDESNDDSDE. A compositionally biased stretch (basic and acidic residues) spans 105–119; it reads SADEKRARKAPRSEN. The segment covering 120–134 has biased composition (acidic residues); that stretch reads FDNDQDDESNDDSDE.

The protein belongs to the bacterial ribosomal protein bS6 family.

Binds together with bS18 to 16S ribosomal RNA. The chain is Small ribosomal subunit protein bS6 from Psychrobacter sp. (strain PRwf-1).